Here is a 2089-residue protein sequence, read N- to C-terminus: Rho GTPase-activating protein 32 (2089 aa).

Positions threonine 24 to phenylalanine 52 are disordered. Residues glycine 131–glycine 245 enclose the PX; atypical domain. One can recognise an SH3 domain in the interval proline 259–glutamine 321. Residues cysteine 372 to phenylalanine 567 enclose the Rho-GAP domain. 4 positions are modified to phosphoserine: serine 706, serine 709, serine 732, and serine 738. Residues lysine 828–glutamate 837 are compositionally biased toward basic and acidic residues. The interval lysine 828–valine 858 is disordered. Residues glycine 840–proline 854 are compositionally biased toward polar residues. Phosphoserine is present on residues serine 852, serine 856, serine 892, and serine 952. 3 disordered regions span residues glutamine 955–proline 1037, cysteine 1119–glycine 1141, and leucine 1154–threonine 1197. Composition is skewed to polar residues over residues leucine 998–alanine 1014 and proline 1132–glycine 1141. Residues aspartate 1175–glycine 1191 show a composition bias toward basic and acidic residues. A Phosphoserine modification is found at serine 1206. The disordered stretch occupies residues glycine 1221–aspartate 1368. Residues aspartate 1225 to aspartate 1235 are compositionally biased toward basic and acidic residues. Over residues threonine 1262–alanine 1275 the composition is skewed to low complexity. Residues arginine 1395 to proline 1714 form an interaction with GAB2 region. Residues arginine 1526 and arginine 1536 each carry the asymmetric dimethylarginine modification. Position 1588 is a phosphoserine (serine 1588). The segment at serine 1688 to glutamate 2089 is interaction with FYN. Disordered stretches follow at residues proline 1801–leucine 1865 and arginine 1881–aspartate 2002. Positions glycine 1826–arginine 1841 are enriched in basic and acidic residues. Residues serine 1850–leucine 1865 show a composition bias toward polar residues. Basic and acidic residues predominate over residues arginine 1881 to cysteine 1892. Residues serine 1918–leucine 1939 show a composition bias toward polar residues. Composition is skewed to basic and acidic residues over residues asparagine 1940–arginine 1954 and proline 1961–phenylalanine 1975. Omega-N-methylarginine is present on arginine 2039.

It belongs to the PX domain-containing GAP family. In terms of assembly, interacts with NTRK1 (via cytoplasmic domain); the interaction is independent of the phosphorylation state of NTRK1. Interacts with SHC3 (via SH2 domain). Interacts with RASA1 (via SH3 domain); the interaction is necessary for the Ras activation and cell transforming activities of ARHGAP32. Interacts with GAB1 and GAB2. Interacts with CRK and CRKL. Found in a complex with CRKL and BCAR1; upon EGF stimulation BCAR1 may be replaced by EGFR. Interacts with NCK1 (via SH3 domain); NCK1 recruits phosphorylated BCAR1 to the complex. Isoform 2 interacts with FYN; the interaction appears to be dependent on tyrosine phosphorylation of ARHGAP32. Interacts with EGFR; the interaction requires EGF stimulation and is increased by SHC3. Interacts with CDC42; the interaction requires constitutively active CDC42. Interacts with CTNNB1, DLG4, CDH2 and GRIN2B. Interacts with GPHN. In terms of processing, isoform 2 is phosphorylated on multiple tyrosine residues by FYN. Phosphorylated tyrosine residues undergo dephosphorylation after stimulation of NMDA receptors. Phosphorylated in vitro by CaMK2 in the presence of calmodulin and calcium; which inhibits GAP activity. In terms of tissue distribution, isoform 1 and isoform 2 are highly expressed in brain, specially in cortex, corpus striatum, hippocampus and thalamus. Low levels in cerebellum, colon, small intestine, and kidney.

It localises to the postsynaptic density. The protein resides in the cell projection. The protein localises to the dendritic spine. Its subcellular location is the cytoplasm. It is found in the cell cortex. It localises to the endosome membrane. The protein resides in the golgi apparatus membrane. The protein localises to the endoplasmic reticulum membrane. Its subcellular location is the membrane. In terms of biological role, GTPase-activating protein (GAP) promoting GTP hydrolysis on RHOA, CDC42 and RAC1 small GTPases. May be involved in the differentiation of neuronal cells during the formation of neurite extensions. Involved in NMDA receptor activity-dependent actin reorganization in dendritic spines. May mediate cross-talks between Ras- and Rho-regulated signaling pathways in cell growth regulation. Isoform 2 has higher GAP activity. The sequence is that of Rho GTPase-activating protein 32 (Arhgap32) from Mus musculus (Mouse).